A 638-amino-acid polypeptide reads, in one-letter code: DNA gyrase subunit B (638 aa).

The Toprim domain occupies 422 to 536 (SELYIVEGDS…NGYVYIAQPP (115 aa)). Mg(2+) contacts are provided by Glu-428, Asp-501, and Asp-503.

Belongs to the type II topoisomerase GyrB family. As to quaternary structure, heterotetramer, composed of two GyrA and two GyrB chains. In the heterotetramer, GyrA contains the active site tyrosine that forms a transient covalent intermediate with DNA, while GyrB binds cofactors and catalyzes ATP hydrolysis. It depends on Mg(2+) as a cofactor. Mn(2+) serves as cofactor. Ca(2+) is required as a cofactor.

It localises to the cytoplasm. The enzyme catalyses ATP-dependent breakage, passage and rejoining of double-stranded DNA.. A type II topoisomerase that negatively supercoils closed circular double-stranded (ds) DNA in an ATP-dependent manner to modulate DNA topology and maintain chromosomes in an underwound state. Negative supercoiling favors strand separation, and DNA replication, transcription, recombination and repair, all of which involve strand separation. Also able to catalyze the interconversion of other topological isomers of dsDNA rings, including catenanes and knotted rings. Type II topoisomerases break and join 2 DNA strands simultaneously in an ATP-dependent manner. The protein is DNA gyrase subunit B of Bacillus subtilis (strain 168).